We begin with the raw amino-acid sequence, 695 residues long: Elongation factor G 1 (695 aa).

Residues 5–280 enclose the tr-type G domain; sequence ARYRNIGIFA…AVVDYLPSPT (276 aa). GTP is bound by residues 14 to 21, 78 to 82, and 132 to 135; these read AHVDAGKT, DTPGH, and NKLD.

It belongs to the TRAFAC class translation factor GTPase superfamily. Classic translation factor GTPase family. EF-G/EF-2 subfamily.

It localises to the cytoplasm. Functionally, catalyzes the GTP-dependent ribosomal translocation step during translation elongation. During this step, the ribosome changes from the pre-translocational (PRE) to the post-translocational (POST) state as the newly formed A-site-bound peptidyl-tRNA and P-site-bound deacylated tRNA move to the P and E sites, respectively. Catalyzes the coordinated movement of the two tRNA molecules, the mRNA and conformational changes in the ribosome. This Pseudoalteromonas atlantica (strain T6c / ATCC BAA-1087) protein is Elongation factor G 1.